The sequence spans 435 residues: GTPase Der (435 aa).

EngA-type G domains follow at residues 4-167 (GIVA…PSHE) and 175-350 (TRVS…TALD). Residues 10–17 (GRPNVGKS), 57–61 (DTGGI), 119–122 (NKYD), 181–188 (GRPNVGKS), 228–232 (DTAGI), and 293–296 (NKWD) each bind GTP. The KH-like domain occupies 351–435 (KKIKTSVFNE…PMSIIFRERK (85 aa)).

The protein belongs to the TRAFAC class TrmE-Era-EngA-EngB-Septin-like GTPase superfamily. EngA (Der) GTPase family. In terms of assembly, associates with the 50S ribosomal subunit.

In terms of biological role, GTPase that plays an essential role in the late steps of ribosome biogenesis. This Mesoplasma florum (strain ATCC 33453 / NBRC 100688 / NCTC 11704 / L1) (Acholeplasma florum) protein is GTPase Der.